A 355-amino-acid polypeptide reads, in one-letter code: UDP-N-acetylglucosamine--N-acetylmuramyl-(pentapeptide) pyrophosphoryl-undecaprenol N-acetylglucosamine transferase (355 aa).

UDP-N-acetyl-alpha-D-glucosamine is bound by residues 15–17 (TGG), N127, R163, S191, I244, 263–268 (ALTVSE), and Q288.

The protein belongs to the glycosyltransferase 28 family. MurG subfamily.

Its subcellular location is the cell inner membrane. It catalyses the reaction di-trans,octa-cis-undecaprenyl diphospho-N-acetyl-alpha-D-muramoyl-L-alanyl-D-glutamyl-meso-2,6-diaminopimeloyl-D-alanyl-D-alanine + UDP-N-acetyl-alpha-D-glucosamine = di-trans,octa-cis-undecaprenyl diphospho-[N-acetyl-alpha-D-glucosaminyl-(1-&gt;4)]-N-acetyl-alpha-D-muramoyl-L-alanyl-D-glutamyl-meso-2,6-diaminopimeloyl-D-alanyl-D-alanine + UDP + H(+). Its pathway is cell wall biogenesis; peptidoglycan biosynthesis. Cell wall formation. Catalyzes the transfer of a GlcNAc subunit on undecaprenyl-pyrophosphoryl-MurNAc-pentapeptide (lipid intermediate I) to form undecaprenyl-pyrophosphoryl-MurNAc-(pentapeptide)GlcNAc (lipid intermediate II). The sequence is that of UDP-N-acetylglucosamine--N-acetylmuramyl-(pentapeptide) pyrophosphoryl-undecaprenol N-acetylglucosamine transferase from Salmonella newport (strain SL254).